The chain runs to 612 residues: Dihydroxy-acid dehydratase (612 aa).

Mg(2+) is bound at residue Asp-81. Cys-122 lines the [2Fe-2S] cluster pocket. Mg(2+)-binding residues include Asp-123 and Lys-124. Lys-124 bears the N6-carboxylysine mark. [2Fe-2S] cluster is bound at residue Cys-195. Glu-491 is a Mg(2+) binding site. Ser-517 serves as the catalytic Proton acceptor.

Belongs to the IlvD/Edd family. In terms of assembly, homodimer. [2Fe-2S] cluster serves as cofactor. It depends on Mg(2+) as a cofactor.

It catalyses the reaction (2R)-2,3-dihydroxy-3-methylbutanoate = 3-methyl-2-oxobutanoate + H2O. The catalysed reaction is (2R,3R)-2,3-dihydroxy-3-methylpentanoate = (S)-3-methyl-2-oxopentanoate + H2O. It functions in the pathway amino-acid biosynthesis; L-isoleucine biosynthesis; L-isoleucine from 2-oxobutanoate: step 3/4. It participates in amino-acid biosynthesis; L-valine biosynthesis; L-valine from pyruvate: step 3/4. Functions in the biosynthesis of branched-chain amino acids. Catalyzes the dehydration of (2R,3R)-2,3-dihydroxy-3-methylpentanoate (2,3-dihydroxy-3-methylvalerate) into 2-oxo-3-methylpentanoate (2-oxo-3-methylvalerate) and of (2R)-2,3-dihydroxy-3-methylbutanoate (2,3-dihydroxyisovalerate) into 2-oxo-3-methylbutanoate (2-oxoisovalerate), the penultimate precursor to L-isoleucine and L-valine, respectively. This chain is Dihydroxy-acid dehydratase, found in Haemophilus influenzae (strain PittGG).